The sequence spans 141 residues: Hemoglobin subunit alpha-1/2 (141 aa).

The Globin domain occupies Val1–Arg141. A Phosphoserine modification is found at Ser3. Residues Lys7 and Lys11 each carry the N6-succinyllysine modification. N6-acetyllysine; alternate is present on Lys16. An N6-succinyllysine; alternate modification is found at Lys16. The residue at position 24 (Tyr24) is a Phosphotyrosine. Ser35 is modified (phosphoserine). Lys40 carries the post-translational modification N6-succinyllysine. Ser49 bears the Phosphoserine mark. His58 provides a ligand contact to O2. Residue His87 participates in heme b binding. Ser102 carries the post-translational modification Phosphoserine. The residue at position 108 (Thr108) is a Phosphothreonine. Phosphoserine is present on residues Ser124 and Ser131. 2 positions are modified to phosphothreonine: Thr134 and Thr137. Residue Ser138 is modified to Phosphoserine.

Belongs to the globin family. Heterotetramer of two alpha chains and two beta chains. As to expression, red blood cells.

Functionally, involved in oxygen transport from the lung to the various peripheral tissues. This is Hemoglobin subunit alpha-1/2 from Macroderma gigas (Australian ghost bat).